Here is a 354-residue protein sequence, read N- to C-terminus: Uroporphyrinogen decarboxylase (354 aa).

Residues 28–32, aspartate 78, tyrosine 155, serine 210, and histidine 325 contribute to the substrate site; that span reads RQAGR.

It belongs to the uroporphyrinogen decarboxylase family. As to quaternary structure, homodimer.

The protein localises to the cytoplasm. It carries out the reaction uroporphyrinogen III + 4 H(+) = coproporphyrinogen III + 4 CO2. The protein operates within porphyrin-containing compound metabolism; protoporphyrin-IX biosynthesis; coproporphyrinogen-III from 5-aminolevulinate: step 4/4. Its function is as follows. Catalyzes the decarboxylation of four acetate groups of uroporphyrinogen-III to yield coproporphyrinogen-III. The protein is Uroporphyrinogen decarboxylase of Crocosphaera subtropica (strain ATCC 51142 / BH68) (Cyanothece sp. (strain ATCC 51142)).